The chain runs to 266 residues: Phosphate import ATP-binding protein PstB 1 (266 aa).

Residues 18–261 (AQTSNLSFYY…PTNQLTEQYV (244 aa)) enclose the ABC transporter domain. 50 to 57 (GPSGCGKT) is an ATP binding site.

This sequence belongs to the ABC transporter superfamily. Phosphate importer (TC 3.A.1.7) family. In terms of assembly, the complex is composed of two ATP-binding proteins (PstB), two transmembrane proteins (PstC and PstA) and a solute-binding protein (PstS).

It is found in the cell inner membrane. The catalysed reaction is phosphate(out) + ATP + H2O = ADP + 2 phosphate(in) + H(+). Part of the ABC transporter complex PstSACB involved in phosphate import. Responsible for energy coupling to the transport system. The sequence is that of Phosphate import ATP-binding protein PstB 1 from Gloeobacter violaceus (strain ATCC 29082 / PCC 7421).